The sequence spans 445 residues: Phosphatidate cytidylyltransferase 2 (445 aa).

Basic and acidic residues predominate over residues 1–39 (MTELRQRVAHEPVAPPEDKESESEAKVDGETASDSESRA). Residues 1–49 (MTELRQRVAHEPVAPPEDKESESEAKVDGETASDSESRAESAPLPVSAD) form a disordered region. Serine 21 carries the post-translational modification Phosphoserine. At threonine 31 the chain carries Phosphothreonine. Residues serine 33, serine 35, and serine 37 each carry the phosphoserine modification. A Phosphothreonine modification is found at threonine 51. The next 6 helical transmembrane spans lie at 79–99 (MIAF…IIVM), 132–152 (FLLC…FFTL), 166–186 (HRFI…LSLV), 213–233 (LVIH…SCVI), 262–282 (GFIG…YVMS), and 340–360 (IALS…ASGF).

The protein belongs to the CDS family. Homodimer. As to expression, widely expressed. Expressed in heart, brain and retina, and to a lesser extent in placenta, lung, liver, skeletal muscle, kidney and pancreas.

It is found in the endoplasmic reticulum membrane. It catalyses the reaction a 1,2-diacyl-sn-glycero-3-phosphate + CTP + H(+) = a CDP-1,2-diacyl-sn-glycerol + diphosphate. The catalysed reaction is 1-octadecanoyl-2-(5Z,8Z,11Z,14Z-eicosatetraenoyl)-sn-glycero-3-phosphate + CTP + H(+) = 1-octadecanoyl-2-(5Z,8Z,11Z,14Z-eicosatetraenoyl)-sn-glycero-3-cytidine-5'-diphosphate + diphosphate. The enzyme catalyses 1-octadecanoyl-2-(9Z,12Z-octadecadienoyl)-sn-glycero-3-phosphate + CTP + H(+) = 1-octadecanoyl-2-(9Z,12Z-octadecadienoyl)-sn-glycero-3-cytidine-5'-diphosphate + diphosphate. It carries out the reaction 1-hexadecanoyl-2-(5Z,8Z,11Z,14Z-eicosatetraenoyl)-sn-glycero-3-phosphate + CTP + H(+) = 1-hexadecanoyl-2-(5Z,8Z,11Z,14Z-eicosatetraenoyl)-sn-glycero-3-cytidine-5'-diphosphate + diphosphate. It catalyses the reaction 1,2-di-(5Z,8Z,11Z,14Z)-eicosatetraenoyl-sn-glycero-3-phosphate + CTP + H(+) = 1,2-di-(5Z,8Z,11Z,14Z-eicosatetraenoyl)-sn-glycero-3-cytidine-5'-diphosphate + diphosphate. The catalysed reaction is 1-octadecanoyl-2-(9Z-octadecenoyl)-sn-glycero-3-phosphate + CTP + H(+) = 1-octadecanoyl-2-(9Z-octadecenoyl)-sn-glycero-3-cytidine-5'-diphosphate + diphosphate. The enzyme catalyses 1-octadecanoyl-2-(4Z,7Z,10Z,13Z,16Z,19Z-docosahexaenoyl)-sn-glycero-3-phosphate + CTP + H(+) = 1-octadecanoyl-2-(4Z,7Z,10Z,13Z,16Z,19Z-docosahexaenoyl)-sn-glycero-3-cytidine-5'-diphosphate + diphosphate. It carries out the reaction 1,2-di-(9Z,12Z-octadecadienoyl)-sn-glycero-3-phosphate + CTP + H(+) = 1,2-di-(9Z,12Z-octadecadienoyl)-sn-glycero-3-cytidine-5'-diphosphate + diphosphate. It catalyses the reaction 1,2-di-(9Z-octadecenoyl)-sn-glycero-3-phosphate + CTP + H(+) = 1,2-di-(9Z-octadecenoyl)-sn-glycero-3-cytidine-5'-diphosphate + diphosphate. It participates in phospholipid metabolism; CDP-diacylglycerol biosynthesis; CDP-diacylglycerol from sn-glycerol 3-phosphate: step 3/3. Its activity is regulated as follows. Inhibited by its anionic phospholipid end products, with phosphatidylinositol-(4,5)- bisphosphate (PIP2) showing the strongest inhibition. Inhibition is also acyl chain specific, with 1-stearoyl-2-arachidonoyl-snphosphatidylinositol showing the strongest inhibition. Functionally, catalyzes the conversion of phosphatidic acid (PA) to CDP-diacylglycerol (CDP-DAG), an essential intermediate in the synthesis of phosphatidylglycerol, cardiolipin and phosphatidylinositol. Exhibits specificity for the nature of the acyl chains at the sn-1 and sn-2 positions in the substrate, PA and the preferred acyl chain composition is 1-stearoyl-2-arachidonoyl-sn-phosphatidic acid. Plays an important role in regulating the growth and maturation of lipid droplets which are storage organelles at the center of lipid and energy homeostasis. The sequence is that of Phosphatidate cytidylyltransferase 2 from Homo sapiens (Human).